A 301-amino-acid chain; its full sequence is MKWLQIHITVDQEQVEFTETLLMSLGAVSVTLDDAEDQALLEPLPGETPLWNKVIVTGIYQQDEQDPIDVDTLEAFLKAQLPDVPMRHEELEDQVWERAWMDYYEPIQIGEKFWIVPEWLEPPEADATNIKLDPGLAFGTGNHASTFLCLQWLGKTDVKNKIVIDYGCGSGILGVAALLLGAKKVYATDIDPQAVLATKQNAELNGVLDRLYVGLPEEFDQEFKPQQADVLVANILAGPLMALAPEFAKLLKSDGDFALAGVIEEQVVDVSGVYSEFFDILDVEKREENWCRISGKRKTTN.

S-adenosyl-L-methionine-binding residues include Thr146, Gly167, Asp189, and Asn234.

Belongs to the methyltransferase superfamily. PrmA family.

The protein localises to the cytoplasm. It catalyses the reaction L-lysyl-[protein] + 3 S-adenosyl-L-methionine = N(6),N(6),N(6)-trimethyl-L-lysyl-[protein] + 3 S-adenosyl-L-homocysteine + 3 H(+). Its function is as follows. Methylates ribosomal protein L11. The protein is Ribosomal protein L11 methyltransferase of Acinetobacter baumannii (strain SDF).